Consider the following 360-residue polypeptide: MPTILVSALEASSNVHLEELRRNLPKDYRFIGVFEGKEALYSPREFSIMGFRDVIGRLGFLLKAHKEMVQLAKQADMVLLMDSSSFNIPLAKKIKKQDPHKKIMYYILPQVWAWKKWRAKSLEKYCDFLGAILPFEVGYYQKKAQYVGHPLLDEIKYYKKDIKGETLVFMPGSRKSEIAKIFPLFVKVAQILEQNEGFKRRVLVVPSFFKGLDLKALYGEDIKLFEISYDAHKSLFEAEFAFICSGTATLEAALIGTPFVLAYRAKTMDFLIARMFVNLHYIGLANIFYNALNNETPGLGESQLHPELIQHFLSVEGLLKAYEEMDRERYFKESLRLREYLASGSARKIANGMAFLLNLT.

This sequence belongs to the LpxB family.

The catalysed reaction is a lipid X + a UDP-2-N,3-O-bis[(3R)-3-hydroxyacyl]-alpha-D-glucosamine = a lipid A disaccharide + UDP + H(+). The protein operates within bacterial outer membrane biogenesis; LPS lipid A biosynthesis. Condensation of UDP-2,3-diacylglucosamine and 2,3-diacylglucosamine-1-phosphate to form lipid A disaccharide, a precursor of lipid A, a phosphorylated glycolipid that anchors the lipopolysaccharide to the outer membrane of the cell. The chain is Lipid-A-disaccharide synthase from Helicobacter pylori (strain Shi470).